The following is a 156-amino-acid chain: UPF0266 membrane protein YobD (156 aa).

The Periplasmic segment spans residues 1 to 5 (MTITD). The chain crosses the membrane as a helical span at residues 6-26 (LVLILFIAALLAYALYDQFIM). Residues 27 to 44 (PRRNGPTLLSIALLRRGR) are Cytoplasmic-facing. A helical transmembrane segment spans residues 45-65 (VDSVIFVGLVAILIYNNVTSH). Gly-66 is a topological domain (periplasmic). A helical transmembrane segment spans residues 67-87 (AQMTTWLLSALALMGFYIFWI). Topologically, residues 88–156 (RTPRIIFKQR…LLIENQYLKI (69 aa)) are cytoplasmic.

It belongs to the UPF0266 family.

The protein resides in the cell inner membrane. The protein is UPF0266 membrane protein YobD (yobD) of Salmonella typhimurium (strain LT2 / SGSC1412 / ATCC 700720).